Here is a 597-residue protein sequence, read N- to C-terminus: Elongation factor 4 (597 aa).

In terms of domain architecture, tr-type G spans 2–184 (QNIRNFSIIA…DIVKKIPAPE (183 aa)). GTP is bound by residues 14–19 (DHGKST) and 131–134 (NKID).

It belongs to the TRAFAC class translation factor GTPase superfamily. Classic translation factor GTPase family. LepA subfamily.

Its subcellular location is the cell inner membrane. The enzyme catalyses GTP + H2O = GDP + phosphate + H(+). Functionally, required for accurate and efficient protein synthesis under certain stress conditions. May act as a fidelity factor of the translation reaction, by catalyzing a one-codon backward translocation of tRNAs on improperly translocated ribosomes. Back-translocation proceeds from a post-translocation (POST) complex to a pre-translocation (PRE) complex, thus giving elongation factor G a second chance to translocate the tRNAs correctly. Binds to ribosomes in a GTP-dependent manner. This chain is Elongation factor 4, found in Haemophilus ducreyi (strain 35000HP / ATCC 700724).